The following is a 435-amino-acid chain: Putative pyridoxal-phosphate dependent protein F13B12.4 (435 aa).

Positions 1-18 (MKLLLLALFLSISASCLA) are cleaved as a signal peptide. N-linked (GlcNAc...) asparagine glycosylation is present at Asn79. Position 89 is an N6-(pyridoxal phosphate)lysine (Lys89). 235 to 239 (GTGGT) serves as a coordination point for pyridoxal 5'-phosphate. The N-linked (GlcNAc...) asparagine glycan is linked to Asn277. Residue Ser342 coordinates pyridoxal 5'-phosphate.

The protein belongs to the cysteine synthase/cystathionine beta-synthase family. Highly divergent.

The chain is Putative pyridoxal-phosphate dependent protein F13B12.4 from Caenorhabditis elegans.